Consider the following 319-residue polypeptide: Thymidylate synthase (319 aa).

DUMP-binding positions include Arg-25 and 181–182 (RR). The active-site Nucleophile is the Cys-201. DUMP-binding positions include 221-224 (RSAD), Asn-232, and 262-264 (HIY). Asp-224 lines the (6R)-5,10-methylene-5,6,7,8-tetrahydrofolate pocket. Residue Ala-318 coordinates (6R)-5,10-methylene-5,6,7,8-tetrahydrofolate.

It belongs to the thymidylate synthase family. Bacterial-type ThyA subfamily. Homodimer.

It localises to the cytoplasm. The catalysed reaction is dUMP + (6R)-5,10-methylene-5,6,7,8-tetrahydrofolate = 7,8-dihydrofolate + dTMP. The protein operates within pyrimidine metabolism; dTTP biosynthesis. Functionally, catalyzes the reductive methylation of 2'-deoxyuridine-5'-monophosphate (dUMP) to 2'-deoxythymidine-5'-monophosphate (dTMP) while utilizing 5,10-methylenetetrahydrofolate (mTHF) as the methyl donor and reductant in the reaction, yielding dihydrofolate (DHF) as a by-product. This enzymatic reaction provides an intracellular de novo source of dTMP, an essential precursor for DNA biosynthesis. This is Thymidylate synthase from Oenococcus oeni (strain ATCC BAA-331 / PSU-1).